We begin with the raw amino-acid sequence, 339 residues long: DNA-directed RNA polymerase subunit alpha (339 aa).

The segment at 1–235 (MVIQKNWQEL…DQLQVFVNFE (235 aa)) is alpha N-terminal domain (alpha-NTD). Residues 251 to 339 (FNPALLKKVD…DLAKRFEEHY (89 aa)) are alpha C-terminal domain (alpha-CTD).

It belongs to the RNA polymerase alpha chain family. Homodimer. The RNAP catalytic core consists of 2 alpha, 1 beta, 1 beta' and 1 omega subunit. When a sigma factor is associated with the core the holoenzyme is formed, which can initiate transcription.

The catalysed reaction is RNA(n) + a ribonucleoside 5'-triphosphate = RNA(n+1) + diphosphate. In terms of biological role, DNA-dependent RNA polymerase catalyzes the transcription of DNA into RNA using the four ribonucleoside triphosphates as substrates. The sequence is that of DNA-directed RNA polymerase subunit alpha from Methylorubrum populi (strain ATCC BAA-705 / NCIMB 13946 / BJ001) (Methylobacterium populi).